Here is a 290-residue protein sequence, read N- to C-terminus: ATP synthase gamma chain (290 aa).

Belongs to the ATPase gamma chain family. F-type ATPases have 2 components, CF(1) - the catalytic core - and CF(0) - the membrane proton channel. CF(1) has five subunits: alpha(3), beta(3), gamma(1), delta(1), epsilon(1). CF(0) has three main subunits: a, b and c.

It is found in the cell inner membrane. Its function is as follows. Produces ATP from ADP in the presence of a proton gradient across the membrane. The gamma chain is believed to be important in regulating ATPase activity and the flow of protons through the CF(0) complex. This Bacteroides fragilis (strain ATCC 25285 / DSM 2151 / CCUG 4856 / JCM 11019 / LMG 10263 / NCTC 9343 / Onslow / VPI 2553 / EN-2) protein is ATP synthase gamma chain.